The following is a 416-amino-acid chain: Squamosa promoter-binding-like protein 8 (416 aa).

Residues 11–51 (SSCDDFGYNATPPPPPSLLPIMDQDGGGGSIQRDHHQHHNH) are disordered. The SBP-type zinc finger occupies 182–260 (PPRCQAEGCK…ADHNRRRRKS (79 aa)). 8 residues coordinate Zn(2+): Cys-185, Cys-190, Cys-207, His-210, Cys-227, Cys-230, His-234, and Cys-246. The Bipartite nuclear localization signal signature appears at 243-259 (KKSCRKRLADHNRRRRK). Residues 250-299 (LADHNRRRRKSKPSDGEHSGEKRRAQANKSAATKDKAGSSSKNAGIGDGF) form a disordered region. The segment covering 261–273 (KPSDGEHSGEKRR) has biased composition (basic and acidic residues).

As to expression, expressed in stems, leaf sheaths, and young panicles. Weakly expressed in ligules, auricles, and leaf sheaths at the basal region.

Its subcellular location is the nucleus. In terms of biological role, probable transcription factor that plays an important role in building the laminar joint between leaf blade and leaf sheath boundary, thereby controlling ligule and auricle development. This is Squamosa promoter-binding-like protein 8 (SPL8) from Oryza sativa subsp. japonica (Rice).